The following is a 220-amino-acid chain: Ribosomal RNA large subunit methyltransferase E (220 aa).

The S-adenosyl-L-methionine site is built by Gly-60, Trp-62, Asp-92, Asp-108, and Asp-133. Residue Lys-173 is the Proton acceptor of the active site. Positions 198–220 are disordered; it reads KPKASRDKSSETFILGRQLKHPR.

This sequence belongs to the class I-like SAM-binding methyltransferase superfamily. RNA methyltransferase RlmE family.

The protein resides in the cytoplasm. It carries out the reaction uridine(2552) in 23S rRNA + S-adenosyl-L-methionine = 2'-O-methyluridine(2552) in 23S rRNA + S-adenosyl-L-homocysteine + H(+). Specifically methylates the uridine in position 2552 of 23S rRNA at the 2'-O position of the ribose in the fully assembled 50S ribosomal subunit. In Burkholderia cenocepacia (strain HI2424), this protein is Ribosomal RNA large subunit methyltransferase E.